A 237-amino-acid polypeptide reads, in one-letter code: Mannose-specific lectin alpha chain (237 aa).

Residues Glu8 and Asp10 each coordinate Mn(2+). The Ca(2+) site is built by Asp10, Tyr12, Asn14, and Asp19. Tyr12 contacts a carbohydrate. Residues Asp19, His24, and Ser34 each contribute to the Mn(2+) site. 99–100 contributes to the a carbohydrate binding site; it reads LY. Asp208 is a Ca(2+) binding site. Arg228 is a binding site for a carbohydrate.

This sequence belongs to the leguminous lectin family. Homotetramer. Post-translationally, the beta and gamma chains are produced by partial proteolytic processing of the lectin alpha chain by an asparaginyl endopeptidase.

Its function is as follows. D-mannose/D-glucose-binding lectin. Also binds derivatives of glucose and mannose such as more complex glycans. This is Mannose-specific lectin alpha chain from Cymbosema roseum (Dioclea purpurea).